The sequence spans 103 residues: NADH-quinone oxidoreductase subunit K (103 aa).

A run of 3 helical transmembrane segments spans residues 4–24, 28–48, and 64–84; these read LTSY…GVIA, IFVI…FLIT, and MVIS…ILLF.

The protein belongs to the complex I subunit 4L family. NDH-1 is composed of 14 different subunits. Subunits NuoA, H, J, K, L, M, N constitute the membrane sector of the complex.

The protein resides in the cell inner membrane. It catalyses the reaction a quinone + NADH + 5 H(+)(in) = a quinol + NAD(+) + 4 H(+)(out). Its function is as follows. NDH-1 shuttles electrons from NADH, via FMN and iron-sulfur (Fe-S) centers, to quinones in the respiratory chain. The immediate electron acceptor for the enzyme in this species is believed to be ubiquinone. Couples the redox reaction to proton translocation (for every two electrons transferred, four hydrogen ions are translocated across the cytoplasmic membrane), and thus conserves the redox energy in a proton gradient. The protein is NADH-quinone oxidoreductase subunit K of Aliarcobacter butzleri (strain RM4018) (Arcobacter butzleri).